We begin with the raw amino-acid sequence, 184 residues long: Large ribosomal subunit protein uL22B (184 aa).

Lys-46 is covalently cross-linked (Glycyl lysine isopeptide (Lys-Gly) (interchain with G-Cter in ubiquitin)). The residue at position 70 (Thr-70) is a Phosphothreonine.

Belongs to the universal ribosomal protein uL22 family. As to quaternary structure, component of the large ribosomal subunit (LSU). Mature yeast ribosomes consist of a small (40S) and a large (60S) subunit. The 40S small subunit contains 1 molecule of ribosomal RNA (18S rRNA) and 33 different proteins (encoded by 57 genes). The large 60S subunit contains 3 rRNA molecules (25S, 5.8S and 5S rRNA) and 46 different proteins (encoded by 81 genes). uL22 is associated with the polypeptide exit tunnel.

It localises to the cytoplasm. Its function is as follows. Component of the ribosome, a large ribonucleoprotein complex responsible for the synthesis of proteins in the cell. The small ribosomal subunit (SSU) binds messenger RNAs (mRNAs) and translates the encoded message by selecting cognate aminoacyl-transfer RNA (tRNA) molecules. The large subunit (LSU) contains the ribosomal catalytic site termed the peptidyl transferase center (PTC), which catalyzes the formation of peptide bonds, thereby polymerizing the amino acids delivered by tRNAs into a polypeptide chain. The nascent polypeptides leave the ribosome through a tunnel in the LSU and interact with protein factors that function in enzymatic processing, targeting, and the membrane insertion of nascent chains at the exit of the ribosomal tunnel. This chain is Large ribosomal subunit protein uL22B, found in Saccharomyces cerevisiae (strain ATCC 204508 / S288c) (Baker's yeast).